The sequence spans 62 residues: Large ribosomal subunit protein uL29 (62 aa).

This sequence belongs to the universal ribosomal protein uL29 family.

The protein is Large ribosomal subunit protein uL29 of Desulfosudis oleivorans (strain DSM 6200 / JCM 39069 / Hxd3) (Desulfococcus oleovorans).